The primary structure comprises 535 residues: Light-independent protochlorophyllide reductase subunit B (535 aa).

Asp-36 contacts [4Fe-4S] cluster. Asp-287 acts as the Proton donor in catalysis. Position 422 to 423 (422 to 423 (GL)) interacts with substrate.

Belongs to the ChlB/BchB/BchZ family. Protochlorophyllide reductase is composed of three subunits; BchL, BchN and BchB. Forms a heterotetramer of two BchB and two BchN subunits. [4Fe-4S] cluster serves as cofactor.

It catalyses the reaction chlorophyllide a + oxidized 2[4Fe-4S]-[ferredoxin] + 2 ADP + 2 phosphate = protochlorophyllide a + reduced 2[4Fe-4S]-[ferredoxin] + 2 ATP + 2 H2O. The protein operates within porphyrin-containing compound metabolism; bacteriochlorophyll biosynthesis (light-independent). Component of the dark-operative protochlorophyllide reductase (DPOR) that uses Mg-ATP and reduced ferredoxin to reduce ring D of protochlorophyllide (Pchlide) to form chlorophyllide a (Chlide). This reaction is light-independent. The NB-protein (BchN-BchB) is the catalytic component of the complex. This chain is Light-independent protochlorophyllide reductase subunit B, found in Rhodopseudomonas palustris (strain BisB5).